The primary structure comprises 179 residues: Ribulose bisphosphate carboxylase small subunit, chloroplastic 2 (179 aa).

The N-terminal 58 residues, 1 to 58, are a transit peptide targeting the chloroplast; sequence MASSATMLSSVATAACVAPAQASMVAPFVGLKSASAFPVTQKTVTGLSTLPSNGGRVQ.

Belongs to the RuBisCO small chain family. In terms of assembly, heterohexadecamer of 8 large and 8 small subunits.

Its subcellular location is the plastid. It localises to the chloroplast. RuBisCO catalyzes two reactions: the carboxylation of D-ribulose 1,5-bisphosphate, the primary event in carbon dioxide fixation, as well as the oxidative fragmentation of the pentose substrate. Both reactions occur simultaneously and in competition at the same active site. Although the small subunit is not catalytic it is essential for maximal activity. The sequence is that of Ribulose bisphosphate carboxylase small subunit, chloroplastic 2 from Fritillaria agrestis (Stinkbells).